The following is a 284-amino-acid chain: 2-dehydro-3-deoxyphosphooctonate aldolase (284 aa).

This sequence belongs to the KdsA family.

It localises to the cytoplasm. It carries out the reaction D-arabinose 5-phosphate + phosphoenolpyruvate + H2O = 3-deoxy-alpha-D-manno-2-octulosonate-8-phosphate + phosphate. It participates in carbohydrate biosynthesis; 3-deoxy-D-manno-octulosonate biosynthesis; 3-deoxy-D-manno-octulosonate from D-ribulose 5-phosphate: step 2/3. Its pathway is bacterial outer membrane biogenesis; lipopolysaccharide biosynthesis. The sequence is that of 2-dehydro-3-deoxyphosphooctonate aldolase from Shigella boydii serotype 18 (strain CDC 3083-94 / BS512).